The primary structure comprises 464 residues: Glycine--tRNA ligase (464 aa).

The substrate site is built by arginine 104 and glutamate 175. ATP-binding positions include 207-209 (RNE), 217-222 (FRTREF), 292-293 (EL), and 336-339 (GVNR). 222-226 (FEQME) is a substrate binding site. 332–336 (EPALG) is a binding site for substrate.

It belongs to the class-II aminoacyl-tRNA synthetase family. In terms of assembly, homodimer.

It is found in the cytoplasm. It carries out the reaction tRNA(Gly) + glycine + ATP = glycyl-tRNA(Gly) + AMP + diphosphate. Its function is as follows. Catalyzes the attachment of glycine to tRNA(Gly). This is Glycine--tRNA ligase from Leptospira borgpetersenii serovar Hardjo-bovis (strain JB197).